Consider the following 291-residue polypeptide: DNA N6-methyl adenine demethylase (291 aa).

The Fe2OG dioxygenase domain maps to 85-256 (GLTLIHNFLS…RGRRIALTMR (172 aa)). 171–173 (LEY) is a 2-oxoglutarate binding site. Fe cation is bound by residues His184, Asp186, and His239.

The protein belongs to the alkB family. Interacts with top-2; the interaction is required for localization of top-2 to DNA. Also interacts with mtss-1, his-24, ule-3, C18B2.3, pgl-1, ceh-93, mcm-4 and F37C4.5. Fe(2+) serves as cofactor.

The protein localises to the nucleus. It catalyses the reaction an N(6)-methyl-2'-deoxyadenosine in DNA + 2-oxoglutarate + O2 = a 2'-deoxyadenosine in DNA + formaldehyde + succinate + CO2. Dioxygenase that specifically demethylates DNA methylated on the 6th position of adenine (N(6)-methyladenosine) DNA. N(6)-methyladenosine (m6A) DNA is involved in epigenetic transgenerational inheritance. Plays an essential role in DNA replication and repair in the germline during meiosis. Binds to components of the DNA replication machinery such as top-2, and directs their localization to DNA to control DNA replication. In Caenorhabditis elegans, this protein is DNA N6-methyl adenine demethylase.